Consider the following 206-residue polypeptide: Thymidylate kinase (206 aa).

11 to 18 contacts ATP; sequence GIDGAGKT.

The protein belongs to the thymidylate kinase family.

The enzyme catalyses dTMP + ATP = dTDP + ADP. Its function is as follows. Phosphorylation of dTMP to form dTDP in both de novo and salvage pathways of dTTP synthesis. The polypeptide is Thymidylate kinase (Burkholderia pseudomallei (strain 1106a)).